The following is a 391-amino-acid chain: Somatostatin receptor type 1 (391 aa).

Positions 1 to 11 (MFPNGTASSPS) are enriched in low complexity. The tract at residues 1-49 (MFPNGTASSPSSPSPSPGSCGEGGGSRGPGAGAADGMEEPGRNASQNGT) is disordered. Over 1 to 55 (MFPNGTASSPSSPSPSPGSCGEGGGSRGPGAGAADGMEEPGRNASQNGTLSEGQG) the chain is Extracellular. Asn4 carries N-linked (GlcNAc...) asparagine glycosylation. A compositionally biased stretch (gly residues) spans 20–33 (CGEGGGSRGPGAGA). Residues Asn43 and Asn47 are each glycosylated (N-linked (GlcNAc...) asparagine). The helical transmembrane segment at 56-83 (SAILISFIYSVVCLVGLCGNSMVIYVIL) threads the bilayer. At 84-93 (RYAKMKTATN) the chain is on the cytoplasmic side. The helical transmembrane segment at 94-119 (IYILNLAIADELLMLSVPFLVTSTLL) threads the bilayer. Residues 120 to 130 (RHWPFGALLCR) are Extracellular-facing. A disulfide bridge links Cys129 with Cys207. Residues 131–152 (LVLSVDAVNMFTSIYCLTVLSV) traverse the membrane as a helical segment. Residues 153–174 (DRYVAVVHPIKAARYRRPTVAK) lie on the Cytoplasmic side of the membrane. Residues 175 to 195 (VVNLGVWVLSLLVILPIVVFS) form a helical membrane-spanning segment. Topologically, residues 196-218 (RTAANSDGTVACNMLMPEPAQRW) are extracellular. Residues 219-243 (LVGFVLYTFLMGFLLPVGAICLCYV) form a helical membrane-spanning segment. The Cytoplasmic segment spans residues 244–269 (LIIAKMRMVALKAGWQQRKRSERKIT). The helical transmembrane segment at 270 to 295 (LMVMMVVMVFVICWMPFYVVQLVNVF) threads the bilayer. Residues 296-302 (AEQDDAT) are Extracellular-facing. The chain crosses the membrane as a helical span at residues 303-326 (VSQLSVILGYANSCANPILYGFLS). The Cytoplasmic segment spans residues 327–391 (DNFKRSFQRI…GTCTSRITTL (65 aa)). The S-palmitoyl cysteine moiety is linked to residue Cys338.

It belongs to the G-protein coupled receptor 1 family. In terms of assembly, interacts with SKB1.

It localises to the cell membrane. Its function is as follows. Receptor for somatostatin with higher affinity for somatostatin-14 than -28. This receptor is coupled via pertussis toxin sensitive G proteins to inhibition of adenylyl cyclase. In addition it stimulates phosphotyrosine phosphatase and Na(+)/H(+) exchanger via pertussis toxin insensitive G proteins. The polypeptide is Somatostatin receptor type 1 (SSTR1) (Canis lupus familiaris (Dog)).